The primary structure comprises 1380 residues: Tripeptidyl-peptidase 2 (1380 aa).

Residues 110-619 enclose the Peptidase S8 domain; it reads STFIASLMPK…QGLMQVDKAY (510 aa). Active-site charge relay system residues include D145, H372, and S558. Residues 1099–1143 form a disordered region; the sequence is DEKEGKNPKDNPVSYPISYVVPPNKPEEDKKAASAPTCSKSVSER. The segment covering 1110–1120 has biased composition (low complexity); that stretch reads PVSYPISYVVP. Coiled coils occupy residues 1152–1181 and 1238–1300; these read KIKF…KSEY and EDDE…ELTK.

This sequence belongs to the peptidase S8 family. As to quaternary structure, assembles into a large oligomeric complex containing two related proteins 153 and 142 kDa that are derived from the single TPP2 gene. The 142 kDa form mainly differs from the 153 kDa form by a truncation at the C-terminal end.

The catalysed reaction is Release of an N-terminal tripeptide from a polypeptide.. Its activity is regulated as follows. Inhibited by alanine-alanine-phenylalanine-chloromethylketone, butabindide and phenylmethanesulfonyl fluoride (PMSF), but not by leupeptin, N-ethylmaleimide, EDTA, MG132 and lactacystin. In terms of biological role, serine protease of the proteasome pathway that may function with the 20S proteasome to degrade oxidized proteins generated by environmental stress. In Arabidopsis thaliana (Mouse-ear cress), this protein is Tripeptidyl-peptidase 2 (TPP2).